Consider the following 1043-residue polypeptide: Non-canonical nonribosomal peptide synthetase cpsA (1043 aa).

The tract at residues 41–386 (RRAQENPSAP…IGGDGVSPGY (346 aa)) is adenylation (A) domain. Residues 549-626 (QDASTTISRL…QMARYVDEGG (78 aa)) enclose the Carrier domain. Ser-586 carries the post-translational modification O-(pantetheine 4'-phosphoryl)serine. The segment at 671 to 914 (MTGATGFVGA…FVPVDYLVDA (244 aa)) is short-chain dehydrogenase/reductase (R) domain. One can recognise a Thioester reductase (TE) domain in the interval 672 to 915 (TGATGFVGAF…VPVDYLVDAI (244 aa)).

Belongs to the NRP synthetase family. It depends on pantetheine 4'-phosphate as a cofactor.

The catalysed reaction is L-valine + ATP + NADPH + H(+) = L-valinal + AMP + diphosphate + NADP(+). The enzyme catalyses L-tryptophan + ATP + NADPH + H(+) = L-tryptophanal + AMP + diphosphate + NADP(+). The protein operates within alkaloid biosynthesis. Functionally, non-canonical nonribosomal peptide synthetase; part of the gene cluster that mediates the biosynthesis of campesine G, a dimeric indole piperazine alkaloid that shows good insecticidal activity Galleria mellonella. CpsA catalyzes the first steps of the pathway by producing L-tryptophanal and L-valinal from their respective amino-acids. These products condensate spontaneously to form trypyl-valyl pyrazine also known as didehydrocampesine A. The NmrA-like family domain-containing oxidoreductase cpsB is the next enzyme in cps pathway and reduces the unstable didehydrocampesine A to campesine A. The methyltransferase cpsF and the acetyltransferase cpsE both recognize N13 of piperazine ring to carry out methylation and acetylation of campesine A to produce campesine C and B, respectively. The cytochrome P450 monooxygenase cpsD then acts as a dimerase that catalyzes oxidative heterocoupling between campesine B and C to produce heterodimers with unexpected 6/5/6/6/6/6/5/6 eight-ring scaffold called campesine D. Finally,the cytochrome P450 monooxygenase cpsC is a regioselective dehydrogenase that catalyzes dehydrogenation reaction towards C2-N1 to produce campesine G. This Aspergillus campestris (strain IBT 28561) protein is Non-canonical nonribosomal peptide synthetase cpsA.